Reading from the N-terminus, the 424-residue chain is Elongation factor 1-alpha (424 aa).

A tr-type G domain is found at 5–223 (KPHLNLITIG…DAFKVPEKPI (219 aa)). Residues 14–21 (GHVDHGKS) form a G1 region. 14–21 (GHVDHGKS) is a GTP binding site. S21 contacts Mg(2+). The G2 stretch occupies residues 70 to 74 (GVTID). The tract at residues 91–94 (DAPG) is G3. Residues 91 to 95 (DAPGH) and 148 to 151 (NKMD) contribute to the GTP site. The G4 stretch occupies residues 148–151 (NKMD). The segment at 187–189 (SGY) is G5.

It belongs to the TRAFAC class translation factor GTPase superfamily. Classic translation factor GTPase family. EF-Tu/EF-1A subfamily.

It is found in the cytoplasm. It catalyses the reaction GTP + H2O = GDP + phosphate + H(+). Its function is as follows. GTP hydrolase that promotes the GTP-dependent binding of aminoacyl-tRNA to the A-site of ribosomes during protein biosynthesis. In Thermoplasma volcanium (strain ATCC 51530 / DSM 4299 / JCM 9571 / NBRC 15438 / GSS1), this protein is Elongation factor 1-alpha.